We begin with the raw amino-acid sequence, 344 residues long: UDP-glucose 4-epimerase (344 aa).

Residues 15-17 (GYI), 36-40 (DNLSN), 63-64 (DI), F85, and K89 contribute to the NAD(+) site. Substrate is bound at residue 129–131 (SAT). Residue Y153 is the Proton acceptor of the active site. The NAD(+) site is built by K157 and Y181. Substrate contacts are provided by residues 181 to 183 (YFN), 202 to 204 (NNL), 220 to 222 (SIF), R235, and 297 to 300 (RKGD).

Belongs to the NAD(P)-dependent epimerase/dehydratase family. Homodimer. It depends on NAD(+) as a cofactor.

The catalysed reaction is UDP-alpha-D-glucose = UDP-alpha-D-galactose. The enzyme catalyses UDP-N-acetyl-alpha-D-glucosamine = UDP-N-acetyl-alpha-D-galactosamine. Its pathway is carbohydrate metabolism; galactose metabolism. Its function is as follows. Catalyzes two distinct but analogous reactions: the reversible epimerization of UDP-glucose to UDP-galactose and the reversible epimerization of UDP-N-acetylglucosamine to UDP-N-acetylgalactosamine. The reaction with UDP-Gal plays a critical role in the Leloir pathway of galactose catabolism in which galactose is converted to the glycolytic intermediate glucose 6-phosphate. It contributes to the catabolism of dietary galactose and enables the endogenous biosynthesis of both UDP-Gal and UDP-GalNAc when exogenous sources are limited. Both UDP-sugar interconversions are important in the synthesis of glycoproteins and glycolipids. The chain is UDP-glucose 4-epimerase (galE) from Dictyostelium discoideum (Social amoeba).